Here is a 346-residue protein sequence, read N- to C-terminus: Sensor protein kinase GraS (346 aa).

2 consecutive transmembrane segments (helical) span residues 15 to 35 (MNWI…SLID) and 43 to 63 (LFYI…LTYF). In terms of domain architecture, Histidine kinase spans 126 to 332 (EFVHDIKTPV…TVRLIFPLQN (207 aa)).

In terms of assembly, interacts with GraX.

It localises to the cell membrane. The enzyme catalyses ATP + protein L-histidine = ADP + protein N-phospho-L-histidine.. In terms of biological role, member of the two-component regulatory system GraR/GraS involved in resistance against cationic antimicrobial peptides (CAMPs). Functions as a sensor protein kinase which phosphorylates GraR through the auxiliary protein GraX. In turn, GraR up-regulates many genes such as adhesins, exoproteins, transporters, toxins, and proteins involved in cell wall synthesis. Down-regulates the expression of many genes involved in RNA and amino acid synthesis or glycolysis. This chain is Sensor protein kinase GraS (graS), found in Staphylococcus aureus (strain bovine RF122 / ET3-1).